A 147-amino-acid chain; its full sequence is Large ribosomal subunit protein uL15 (147 aa).

The interval 1–54 is disordered; it reads MKLFELQPAPGSKKLPNRKGRGIGSGNGKTGGRGHKGQNARAGGGVRPGFEGGQ. Gly residues-rich tracts occupy residues 22–31 and 42–52; these read GIGSGNGKTG and AGGGVRPGFEG.

The protein belongs to the universal ribosomal protein uL15 family. Part of the 50S ribosomal subunit.

Binds to the 23S rRNA. This is Large ribosomal subunit protein uL15 from Ruminiclostridium cellulolyticum (strain ATCC 35319 / DSM 5812 / JCM 6584 / H10) (Clostridium cellulolyticum).